The chain runs to 306 residues: MLNYVIKRLLGLIPTLFIVSVLVFLFVHMLPGDPARLIAGPEADAQVIELVRQQLGLDQPLYHQFWHYISNAVQGDFGLSMVSRRPVADEIASRFMPTLWLTITSMVWAVIFGMAAGIIAAVWRNRWPDRLSMTIAVSGISFPAFALGMFLIQVFSVELGWLPTVGADSWQHYILPSLTLGAAVAAVMARFTRASFVDVLSEDYMRTARAKGVSETWVVLKHGLRNAMIPVVTMMGLQFGFLLGGSIVVEKVFNWPGLGRLLVDSVEMRDYPVIQAEILLFSLEFILINLVVDVLYAAINPAIRYK.

Topologically, residues 1-8 (MLNYVIKR) are cytoplasmic. A helical transmembrane segment spans residues 9–29 (LLGLIPTLFIVSVLVFLFVHM). The Periplasmic segment spans residues 30-102 (LPGDPARLIA…SRFMPTLWLT (73 aa)). Residues 95–292 (FMPTLWLTIT…LEFILINLVV (198 aa)) form the ABC transmembrane type-1 domain. Residues 103 to 123 (ITSMVWAVIFGMAAGIIAAVW) traverse the membrane as a helical segment. The Cytoplasmic portion of the chain corresponds to 124 to 134 (RNRWPDRLSMT). The chain crosses the membrane as a helical span at residues 135–155 (IAVSGISFPAFALGMFLIQVF). The Periplasmic segment spans residues 156–168 (SVELGWLPTVGAD). Residues 169-189 (SWQHYILPSLTLGAAVAAVMA) form a helical membrane-spanning segment. The Cytoplasmic segment spans residues 190–228 (RFTRASFVDVLSEDYMRTARAKGVSETWVVLKHGLRNAM). The chain crosses the membrane as a helical span at residues 229–249 (IPVVTMMGLQFGFLLGGSIVV). The Periplasmic segment spans residues 250-277 (EKVFNWPGLGRLLVDSVEMRDYPVIQAE). The helical transmembrane segment at 278 to 298 (ILLFSLEFILINLVVDVLYAA) threads the bilayer. Topologically, residues 299–306 (INPAIRYK) are cytoplasmic.

The protein belongs to the binding-protein-dependent transport system permease family. As to quaternary structure, the complex is composed of two ATP-binding proteins (GsiA), two transmembrane proteins (GsiC and GsiD) and a solute-binding protein (GsiB).

Its subcellular location is the cell inner membrane. Its function is as follows. Part of the ABC transporter complex GsiABCD involved in glutathione import. Probably responsible for the translocation of the substrate across the membrane. The polypeptide is Glutathione transport system permease protein GsiC (Shigella flexneri serotype 5b (strain 8401)).